Reading from the N-terminus, the 105-residue chain is Large ribosomal subunit protein uL23 (105 aa).

This sequence belongs to the universal ribosomal protein uL23 family. In terms of assembly, part of the 50S ribosomal subunit. Contacts protein L29, and trigger factor when it is bound to the ribosome.

Functionally, one of the early assembly proteins it binds 23S rRNA. One of the proteins that surrounds the polypeptide exit tunnel on the outside of the ribosome. Forms the main docking site for trigger factor binding to the ribosome. This Ureaplasma urealyticum serovar 10 (strain ATCC 33699 / Western) protein is Large ribosomal subunit protein uL23.